The chain runs to 348 residues: tRNA pseudouridine synthase D (348 aa).

Phe26 contacts substrate. The active-site Nucleophile is the Asp79. Asn128 contributes to the substrate binding site. In terms of domain architecture, TRUD spans 154 to 302 (GVPNYFGSQR…VDPARRALLL (149 aa)). Phe328 serves as a coordination point for substrate.

The protein belongs to the pseudouridine synthase TruD family.

The enzyme catalyses uridine(13) in tRNA = pseudouridine(13) in tRNA. Its function is as follows. Responsible for synthesis of pseudouridine from uracil-13 in transfer RNAs. The sequence is that of tRNA pseudouridine synthase D from Serratia proteamaculans (strain 568).